The primary structure comprises 378 residues: MLWTLMSNPILIGQSTHYYDSRSSSLRQRNQPKQLLLLLLRTIIVVSVITFAAIIGCWVFLSHGTTTTNPPQQCSTPAVRKEWRSLSPSAQAKYISAVQCLMYLPSVHKEGTTLYDDFVFGHSKTGSYSHYAASFLPWHRMYLHVYERALRDHCGYSESLPYWDWTLDSHHLSASPIWDPVTGFGGDGNPGGAETLHGGRCVVDGPFANSTRAWRALSEGHNHDVEYGPHCLSRGFIINNDDRTTLDMLHGLVSPSRVAQTLDKPDYIAFFEDFESGPHNAIPQFIRGDFLTFSAPNDPVFYLHHANVDRLWWLWQQRDPVGRLYQVRGPAKDFRYHEGHEVSEGSIEDVMPMGGLAEDIKMKSVMDTRAGFLCYEYE.

The helical transmembrane segment at 42–62 threads the bilayer; it reads TIIVVSVITFAAIIGCWVFLS. The Cu cation site is built by histidine 130 and histidine 139. N-linked (GlcNAc...) asparagine glycosylation occurs at asparagine 209. Residues histidine 279 and histidine 305 each contribute to the Cu cation site.

This sequence belongs to the tyrosinase family. It depends on Cu(2+) as a cofactor.

It localises to the membrane. Its pathway is mycotoxin biosynthesis. In terms of biological role, tyrosinase-like protein; part of the gene cluster that mediates the biosynthesis of the phomopsins, a group of hexapeptide mycotoxins which infects lupins and causes lupinosis disease in livestock. The pathway starts with the processing of the precursor phomA' by several endopeptidases including kexin proteases as well as the cluster-specific S41 family peptidase phomP1 and the oligopeptidase phomG' to produce 10 identical copies of the hexapeptide Tyr-Val-Ile-Pro-Ile-Asp. After being excised from the precursor peptide, the core peptides are cyclized and modified post-translationally by enzymes encoded within the gene cluster. The timing and order of proteolysis of the phomA' precursor and PTMs are still unknown. Two tyrosinase-like enzymes, phomQ1' and phomQ2, catalyze the chlorination and hydroxylation of Tyr, respectively. PhomYb, is proposed to be involved in the construction of the macrocyclic structure. The other 4 ustYa family proteins may be involved in PTMs that generate the unique structure of phomopsin A. PhomYa' is required for the hydroxylation of C-beta of Tyr. PhomYc', phomYd', and phomYe are responsible for the biosynthesis of 2,3-dehydroisoleucine (dIle), 2,3-dehydroaspartic acid (dAsp), and 3,4-dehydroproline (dPro), respectively. While dIle formation by phomYc' is indispensable for the installation of dAsp by phomYd', the order of the other PTMs have not been elucidated yet. Most of the biosynthetic enzymes likely have broad substrate specificity, and thus, there might be a metabolic grid from a precursor to phomopsin A. The enzyme(s) responsible for the biosynthesis of 3,4-dehydrovaline (dVal) have also not been identified yet. Finally, phomM' acts as an S-adenosylmethionine-dependent alpha-N-methyltransferase that catalyzes two successive N-methylation reactions, converting N-desmethyl-phomopsin A to phomopsin A and phomopsin A further to an N,N-dimethylated congener called phomopsin E. The polypeptide is Tyrosinase-like protein phomQ1' (Diaporthe leptostromiformis (Lupinosis disease fungus)).